The sequence spans 627 residues: Protein zyg-11 homolog A (627 aa).

3 LRR repeats span residues 123 to 146 (LPNL…LSCK), 203 to 227 (LPNL…SFLQ), and 409 to 432 (ITSI…LIMA).

Belongs to the zyg-11 family.

Its function is as follows. Probably acts as a target recruitment subunit in an E3 ubiquitin ligase complex ZYGA-CUL2-elongin BC. In Mus musculus (Mouse), this protein is Protein zyg-11 homolog A (Zyg11a).